The chain runs to 367 residues: Phospho-N-acetylmuramoyl-pentapeptide-transferase (367 aa).

Helical transmembrane passes span 16-36, 62-82, 87-107, 125-145, 158-178, 190-210, 214-234, 240-260, 264-284, and 326-346; these read LLLAAAAFVLTLIIGGWWVRF, TMGGIMIVSTVLILTILFNLV, MLLPLGVMVSFAVLGAIDDWL, FWIMMAVAFVASLALYLPQPY, VGEVNIGLWFIPIAVLIIVFI, SLAGWNLTLAFGAYGVITFLA, LTNLMAFCFTVVGACAAFLWY, QVFMGDLGALALGATLAVVAL, QWLLLPVIGIVFVVEALSTMI, and FVLIGTVAAMVGISLALIFGP.

This sequence belongs to the glycosyltransferase 4 family. MraY subfamily. It depends on Mg(2+) as a cofactor.

The protein resides in the cell membrane. It carries out the reaction UDP-N-acetyl-alpha-D-muramoyl-L-alanyl-gamma-D-glutamyl-meso-2,6-diaminopimeloyl-D-alanyl-D-alanine + di-trans,octa-cis-undecaprenyl phosphate = di-trans,octa-cis-undecaprenyl diphospho-N-acetyl-alpha-D-muramoyl-L-alanyl-D-glutamyl-meso-2,6-diaminopimeloyl-D-alanyl-D-alanine + UMP. The protein operates within cell wall biogenesis; peptidoglycan biosynthesis. Functionally, catalyzes the initial step of the lipid cycle reactions in the biosynthesis of the cell wall peptidoglycan: transfers peptidoglycan precursor phospho-MurNAc-pentapeptide from UDP-MurNAc-pentapeptide onto the lipid carrier undecaprenyl phosphate, yielding undecaprenyl-pyrophosphoryl-MurNAc-pentapeptide, known as lipid I. The polypeptide is Phospho-N-acetylmuramoyl-pentapeptide-transferase (Chloroflexus aurantiacus (strain ATCC 29366 / DSM 635 / J-10-fl)).